The primary structure comprises 281 residues: Protein DOG1-like 1 (281 aa).

The DOG1 domain maps to 9–265 (EKLQQDCYNE…HEWGKSREHR (257 aa)). Residues 262-281 (REHRRLEASGGDSGGNVTRE) form a disordered region.

The chain is Protein DOG1-like 1 from Arabidopsis thaliana (Mouse-ear cress).